We begin with the raw amino-acid sequence, 200 residues long: ATP-dependent Clp protease proteolytic subunit 3 (200 aa).

S101 serves as the catalytic Nucleophile. Residue H126 is part of the active site.

Belongs to the peptidase S14 family. As to quaternary structure, fourteen ClpP subunits assemble into 2 heptameric rings which stack back to back to give a disk-like structure with a central cavity, resembling the structure of eukaryotic proteasomes.

Its subcellular location is the cytoplasm. It catalyses the reaction Hydrolysis of proteins to small peptides in the presence of ATP and magnesium. alpha-casein is the usual test substrate. In the absence of ATP, only oligopeptides shorter than five residues are hydrolyzed (such as succinyl-Leu-Tyr-|-NHMec, and Leu-Tyr-Leu-|-Tyr-Trp, in which cleavage of the -Tyr-|-Leu- and -Tyr-|-Trp bonds also occurs).. Cleaves peptides in various proteins in a process that requires ATP hydrolysis. Has a chymotrypsin-like activity. Plays a major role in the degradation of misfolded proteins. The protein is ATP-dependent Clp protease proteolytic subunit 3 of Parasynechococcus marenigrum (strain WH8102).